The chain runs to 75 residues: U6-lycotoxin-Ls1b (75 aa).

Positions 1 to 21 (MKLLLFTALVLVVISLIEVEA) are cleaved as a signal peptide. Positions 22-25 (ENER) are excised as a propeptide.

Belongs to the neurotoxin 19 (CSTX) family. 06 (U6-Lctx) subfamily. Post-translationally, contains 4 disulfide bonds. As to expression, expressed by the venom gland.

The protein localises to the secreted. The chain is U6-lycotoxin-Ls1b from Lycosa singoriensis (Wolf spider).